We begin with the raw amino-acid sequence, 554 residues long: Hedycaryol synthase (554 aa).

(2E,6E)-farnesyl diphosphate contacts are provided by arginine 270, aspartate 307, aspartate 311, arginine 449, and aspartate 452. Residues aspartate 307 and aspartate 311 each coordinate Mg(2+). Residues 307–311 (DDTYD) carry the DDXXD motif motif. The Mg(2+) site is built by aspartate 452, serine 456, and glutamate 460.

Belongs to the terpene synthase family. It depends on Mg(2+) as a cofactor. In terms of tissue distribution, specifically expressed in flowers.

It carries out the reaction (2E,6E)-farnesyl diphosphate + H2O = (2E,6E)-hedycaryol + diphosphate. It functions in the pathway secondary metabolite biosynthesis; terpenoid biosynthesis. Its function is as follows. Sesquiterpene synthase that catalyzes the formation of sesquiterpenes and sesquiterpenoid alcohols. Converts farnesyl diphosphate (FPP) to hedycaryol. Hedycaryol is likely to be one of the terpenes that attract insects for pollination of Camellia brevistyla. This Camellia brevistyla protein is Hedycaryol synthase.